The following is a 187-amino-acid chain: Cytochrome b-245 chaperone 1 (187 aa).

Residues 20-42 (GIRSWSLLVGILSTGLAAAYYSG) form a helical membrane-spanning segment. Residues 167-187 (ESPSERSQSSDSEPDGPGGQS) are disordered. S168 and S170 each carry phosphoserine.

Belongs to the CYBC1 family. As to quaternary structure, interacts with CYBB; CYBC1 may act as a chaperone stabilizing Cytochrome b-245 heterodimer.

It is found in the endoplasmic reticulum membrane. In terms of biological role, functions as a chaperone necessary for a stable expression of the CYBA and CYBB subunits of the cytochrome b-245 heterodimer. Controls the phagocyte respiratory burst and is essential for innate immunity. The polypeptide is Cytochrome b-245 chaperone 1 (Rattus norvegicus (Rat)).